We begin with the raw amino-acid sequence, 356 residues long: uncharacterized protein (356 aa).

Residues 1–21 form the signal peptide; it reads MHWSRFVGIFLVFSVFSLVNC. Positions 293-317 are disordered; that stretch reads RPETDYEGANLPNIPSKKGSANQPV.

This is an uncharacterized protein from Acanthamoeba polyphaga mimivirus (APMV).